A 197-amino-acid chain; its full sequence is Small ribosomal subunit protein uS4y (197 aa).

Residues R109–A183 form the S4 RNA-binding domain. The tract at residues S161–E197 is disordered.

It belongs to the universal ribosomal protein uS4 family. Binds to the translation initiation factors TIF3E1.

The polypeptide is Small ribosomal subunit protein uS4y (RPS9C) (Arabidopsis thaliana (Mouse-ear cress)).